The primary structure comprises 287 residues: Phospholipid phosphatase 2 (287 aa).

Over 1–4 the chain is Cytoplasmic; it reads MERR. The helical transmembrane segment at 5–25 threads the bilayer; the sequence is WVFVLLDVLCVLVAALPCAIL. Residues 26–51 are Lumenal-facing; the sequence is TFVNTPYKRGFYCGDDSIRYPYRPDT. Residues 52–72 traverse the membrane as a helical segment; it reads ITHGLMAGVIITATVILVSAG. The Cytoplasmic segment spans residues 73-87; it reads EAYLVYTDRLYSRSD. The helical transmembrane segment at 88-108 threads the bilayer; sequence FNNYLAALYKVVGTFLFGAAV. Topologically, residues 109–161 are lumenal; that stretch reads SQSLTDLAKYMTGRLRPNFLAVCDPDWSRVNCSAYVQVEVCRGSSANVTESRL. The interval 117–125 is phosphatase sequence motif I; that stretch reads KYMTGRLRP. Residues Asn139 and Asn155 are each glycosylated (N-linked (GlcNAc...) asparagine). A helical transmembrane segment spans residues 162–182; the sequence is SFYSGHSSFGMYCMVFLALYV. Residues 164–167 are phosphatase sequence motif II; sequence YSGH. The Proton donors role is filled by His167. The Cytoplasmic portion of the chain corresponds to 183–193; that stretch reads QARLCWKWARL. The helical transmembrane segment at 194–211 threads the bilayer; sequence LRPTVQFFLVAFALYVGY. The Lumenal segment spans residues 212–218; the sequence is TRVSDHK. Residues 212–223 are phosphatase sequence motif III; the sequence is TRVSDHKHHWSD. The active-site Nucleophile is His219. A helical membrane pass occupies residues 219-239; it reads HHWSDVLVGLLQGALVASLTV. At 240–287 the chain is on the cytoplasmic side; sequence RYISDFFKARPPQHCPEEEDLERKPSLSLTLALGETDCNHYGYPVSSS.

The protein belongs to the PA-phosphatase related phosphoesterase family. As to quaternary structure, forms functional homodimers and homooligomers. Can also form heterooligomers with PLPP1 and PLPP3. In terms of processing, N-glycosylated.

The protein resides in the membrane. It localises to the cell membrane. Its subcellular location is the early endosome membrane. The protein localises to the endoplasmic reticulum membrane. It carries out the reaction a 1,2-diacyl-sn-glycero-3-phosphate + H2O = a 1,2-diacyl-sn-glycerol + phosphate. The enzyme catalyses 1,2-dihexadecanoyl-sn-glycero-3-phosphate + H2O = 1,2-dihexadecanoyl-sn-glycerol + phosphate. The catalysed reaction is 1,2-di-(9Z-octadecenoyl)-sn-glycero-3-phosphate + H2O = 1,2-di-(9Z-octadecenoyl)-sn-glycerol + phosphate. It catalyses the reaction a monoacyl-sn-glycero-3-phosphate + H2O = a monoacylglycerol + phosphate. It carries out the reaction (9Z)-octadecenoyl-sn-glycero-3-phosphate + H2O = (9Z-octadecenoyl)-glycerol + phosphate. The enzyme catalyses sphing-4-enine 1-phosphate + H2O = sphing-4-enine + phosphate. The catalysed reaction is an N-acylsphing-4-enine 1-phosphate + H2O = an N-acylsphing-4-enine + phosphate. It catalyses the reaction N-(octanoyl)-sphing-4-enine-1-phosphate + H2O = N-octanoylsphing-4-enine + phosphate. It carries out the reaction N-(9Z-octadecenoyl)-ethanolamine phosphate + H2O = N-(9Z-octadecenoyl) ethanolamine + phosphate. Its pathway is lipid metabolism; phospholipid metabolism. Its activity is regulated as follows. Magnesium-independent phospholipid phosphatase. Insensitive to N-ethylmaleimide. In terms of biological role, magnesium-independent phospholipid phosphatase that catalyzes the dephosphorylation of a variety of glycerolipid and sphingolipid phosphate esters including phosphatidate/PA, lysophosphatidate/LPA, sphingosine 1-phosphate/S1P and ceramide 1-phosphate/C1P. Has no apparent extracellular phosphatase activity and therefore most probably acts intracellularly. Also acts on N-oleoyl ethanolamine phosphate/N-(9Z-octadecenoyl)-ethanolamine phosphate, a potential physiological compound. Through dephosphorylation of these bioactive lipid mediators produces new bioactive compounds and may regulate signal transduction in different cellular processes. Indirectly regulates, for instance, cell cycle G1/S phase transition through its phospholipid phosphatase activity. The sequence is that of Phospholipid phosphatase 2 from Bos taurus (Bovine).